Reading from the N-terminus, the 591-residue chain is L-fucose isomerase (591 aa).

Residues Glu-337 and Asp-361 each act as proton acceptor in the active site. Residues Glu-337, Asp-361, and His-528 each coordinate Mn(2+).

Belongs to the L-fucose isomerase family. Homohexamer. It depends on Mn(2+) as a cofactor.

The protein localises to the cytoplasm. It carries out the reaction L-fucose = L-fuculose. It functions in the pathway carbohydrate degradation; L-fucose degradation; L-lactaldehyde and glycerone phosphate from L-fucose: step 1/3. In terms of biological role, converts the aldose L-fucose into the corresponding ketose L-fuculose. This Escherichia coli O139:H28 (strain E24377A / ETEC) protein is L-fucose isomerase.